The following is a 278-amino-acid chain: Large ribosomal subunit protein uL2 (278 aa).

Residues 223–278 are disordered; sequence GVAMNPIDHPHGGGEGRTSGGRHPVTPWGFPTKGKKTRSNKRTDTFIVSSRHNRKK.

The protein belongs to the universal ribosomal protein uL2 family. As to quaternary structure, part of the 50S ribosomal subunit. Forms a bridge to the 30S subunit in the 70S ribosome.

Its function is as follows. One of the primary rRNA binding proteins. Required for association of the 30S and 50S subunits to form the 70S ribosome, for tRNA binding and peptide bond formation. It has been suggested to have peptidyltransferase activity; this is somewhat controversial. Makes several contacts with the 16S rRNA in the 70S ribosome. This chain is Large ribosomal subunit protein uL2, found in Methylobacterium nodulans (strain LMG 21967 / CNCM I-2342 / ORS 2060).